The chain runs to 225 residues: U2 small nuclear ribonucleoprotein B'' (225 aa).

The RRM 1 domain maps to 7–86 (HTIYINNMND…KPMRIQYAKT (80 aa)). Residues 99–145 (ADKEKKKEKKKAKTVEQTATTTNKKPGQGTPNSANTQGNSTPNPQVP) are disordered. Lysine 111 carries the post-translational modification N6-acetyllysine; alternate. A Glycyl lysine isopeptide (Lys-Gly) (interchain with G-Cter in SUMO2); alternate cross-link involves residue lysine 111. Over residues 113–123 (VEQTATTTNKK) the composition is skewed to low complexity. Residues 127–141 (GTPNSANTQGNSTPN) show a composition bias toward polar residues. Tyrosine 151 is modified (phosphotyrosine). The region spanning 151-225 (YILFLNNLPE…HAMKITYAKK (75 aa)) is the RRM 2 domain.

It belongs to the RRM U1 A/B'' family. In terms of assembly, identified in the spliceosome B complex. Identified in the spliceosome C complex. Present in a spliceosome complex assembled in vitro, and composed of SNRPB2, HPRP8BP and CRNKL1. Contributes to the binding of stem loop IV of U2 snRNA with SNRPP1.

It is found in the nucleus. Involved in pre-mRNA splicing as component of the spliceosome. Associated with sn-RNP U2, where it contributes to the binding of stem loop IV of U2 snRNA. This chain is U2 small nuclear ribonucleoprotein B'' (SNRPB2), found in Homo sapiens (Human).